The chain runs to 165 residues: UPF0303 protein BMA1246 (165 aa).

It belongs to the UPF0303 family.

This is UPF0303 protein BMA1246 from Burkholderia mallei (strain ATCC 23344).